The chain runs to 121 residues: Small ribosomal subunit protein uS13 (121 aa).

The interval 91 to 121 (HRRGLPVRGQNSKNNARTRKGPRRTVANKKK) is disordered. Over residues 106 to 121 (ARTRKGPRRTVANKKK) the composition is skewed to basic residues.

Belongs to the universal ribosomal protein uS13 family. In terms of assembly, part of the 30S ribosomal subunit. Forms a loose heterodimer with protein S19. Forms two bridges to the 50S subunit in the 70S ribosome.

In terms of biological role, located at the top of the head of the 30S subunit, it contacts several helices of the 16S rRNA. In the 70S ribosome it contacts the 23S rRNA (bridge B1a) and protein L5 of the 50S subunit (bridge B1b), connecting the 2 subunits; these bridges are implicated in subunit movement. Contacts the tRNAs in the A and P-sites. In Bacillus cereus (strain AH187), this protein is Small ribosomal subunit protein uS13.